Here is a 66-residue protein sequence, read N- to C-terminus: Beta-mammal toxin Co1 (66 aa).

The LCN-type CS-alpha/beta domain maps to Lys1–Asn66. Disulfide bonds link Cys12-Cys65, Cys16-Cys41, Cys25-Cys46, and Cys29-Cys48.

Expressed by the venom gland.

It is found in the secreted. Beta toxins bind voltage-independently at site-4 of sodium channels (Nav) and shift the voltage of activation toward more negative potentials thereby affecting sodium channel activation and promoting spontaneous and repetitive firing. This toxin acts on human Nav1.6/SCN8A voltage-gated sodium channels. In vivo, is lethal to mice 40 minutes after intraperitoneal injection at a dose of 5ug. No activity is observed when injected into crickets or woodlice. The sequence is that of Beta-mammal toxin Co1 from Centruroides ornatus (Scorpion).